Here is a 306-residue protein sequence, read N- to C-terminus: Curved DNA-binding protein (306 aa).

The J domain maps to 5 to 69; that stretch reads DYYAIMGVKP…QRRAEYDQMW (65 aa).

The protein resides in the cytoplasm. It is found in the nucleoid. Its function is as follows. DNA-binding protein that preferentially recognizes a curved DNA sequence. It is probably a functional analog of DnaJ; displays overlapping activities with DnaJ, but functions under different conditions, probably acting as a molecular chaperone in an adaptive response to environmental stresses other than heat shock. Lacks autonomous chaperone activity; binds native substrates and targets them for recognition by DnaK. Its activity is inhibited by the binding of CbpM. This Escherichia coli O7:K1 (strain IAI39 / ExPEC) protein is Curved DNA-binding protein.